The chain runs to 325 residues: Taste receptor type 2 member 7 (325 aa).

Residues M1–L9 lie on the Extracellular side of the membrane. The chain crosses the membrane as a helical span at residues L10–V30. Residues N31 to R55 are Cytoplasmic-facing. The chain crosses the membrane as a helical span at residues I56–Y76. Residues A77–H94 lie on the Extracellular side of the membrane. The helical transmembrane segment at L95–F115 threads the bilayer. Residues H116–R128 are Cytoplasmic-facing. Residues V129 to T149 form a helical membrane-spanning segment. The Extracellular segment spans residues E150 to N187. Residues N167 and N175 are each glycosylated (N-linked (GlcNAc...) asparagine). A helical transmembrane segment spans residues L188–L208. The Cytoplasmic portion of the chain corresponds to R209–K235. Residues A236–S256 form a helical membrane-spanning segment. Topologically, residues S257 to A266 are extracellular. The helical transmembrane segment at V267–L287 threads the bilayer. Topologically, residues G288–G319 are cytoplasmic.

Belongs to the G-protein coupled receptor T2R family.

It is found in the membrane. In terms of biological role, gustducin-coupled receptor implicated in the perception of bitter compounds in the oral cavity and the gastrointestinal tract. Signals through PLCB2 and the calcium-regulated cation channel TRPM5. The protein is Taste receptor type 2 member 7 (TAS2R7) of Pan paniscus (Pygmy chimpanzee).